The following is a 338-amino-acid chain: Homocysteine S-methyltransferase 3 (338 aa).

The region spanning 12–326 is the Hcy-binding domain; it reads AVRRWVDAAG…NTIRAIHRTL (315 aa). The Zn(2+) site is built by Cys-244, Cys-311, and Cys-312.

Monomer. The cofactor is Zn(2+).

It carries out the reaction S-methyl-L-methionine + L-homocysteine = 2 L-methionine + H(+). Its function is as follows. Catalyzes methyl transfer from S-methylmethionine (SMM) to adenosyl-L-homocysteine (AdoMet). SMM degradation (by HMT-1, HMT-2, HMT-3 and HMT-4) and biosynthesis (by MMT1) constitute the SMM cycle in plants, which is probably required to achieve short term control of AdoMet level. In Zea mays (Maize), this protein is Homocysteine S-methyltransferase 3 (HMT-3).